Here is a 105-residue protein sequence, read N- to C-terminus: U2-lycotoxin-Ls1a (105 aa).

The N-terminal stretch at 1–17 is a signal peptide; that stretch reads MIKYVLISALLVVAVYS. A propeptide spanning residues 18 to 41 is cleaved from the precursor; the sequence is FTIEDNEDALLEEAEDELDTEEER. Disulfide bonds link Cys51–Cys67, Cys58–Cys97, Cys60–Cys83, and Cys69–Cys81.

This sequence belongs to the neurotoxin 04 (omega-agtx) family. 01 (type I omega-agtx) subfamily. In terms of tissue distribution, expressed by the venom gland.

It is found in the secreted. Insecticidal to house crickets. It induces an excitatory slow-onset impact that leads to irreversible spastic paralysis. It also modifies human voltage-gated potassium channel Kv1.5/KCNA5. Most likely, it binds to the voltage-sensing domain of the channel, suggesting it does not block the pore but prevents its opening at physiological membrane potentials. The recombinant peptide binds to the channel in an irreversible manner and slows down the hKv1.5 current activation kinetics. It is not toxic to mice, when intracranially injected (at 0.5 ug/g mouse). This is U2-lycotoxin-Ls1a from Lycosa singoriensis (Wolf spider).